The following is a 123-amino-acid chain: Large ribosomal subunit protein uL14 (123 aa).

Belongs to the universal ribosomal protein uL14 family. Part of the 50S ribosomal subunit. Forms a cluster with proteins L3 and L19. In the 70S ribosome, L14 and L19 interact and together make contacts with the 16S rRNA in bridges B5 and B8.

Functionally, binds to 23S rRNA. Forms part of two intersubunit bridges in the 70S ribosome. In Photorhabdus laumondii subsp. laumondii (strain DSM 15139 / CIP 105565 / TT01) (Photorhabdus luminescens subsp. laumondii), this protein is Large ribosomal subunit protein uL14.